Consider the following 108-residue polypeptide: Small ribosomal subunit protein bS16 (108 aa).

The disordered stretch occupies residues glutamate 82 to asparagine 108. Residues proline 96–asparagine 108 are compositionally biased toward basic residues.

The protein belongs to the bacterial ribosomal protein bS16 family.

The polypeptide is Small ribosomal subunit protein bS16 (Mycoplasma capricolum subsp. capricolum (strain California kid / ATCC 27343 / NCTC 10154)).